The following is a 109-amino-acid chain: MAAKKMHVKKDDMVMVIAGKEKGKTGKIMRVLPGKGRVVVENLNVVKRHTRPNRVNTQGGIVEKEAPLDASNVALVCSACNKPTRTGVRVLEDGTKTRFCKKCNETLDK.

It belongs to the universal ribosomal protein uL24 family. Part of the 50S ribosomal subunit.

One of two assembly initiator proteins, it binds directly to the 5'-end of the 23S rRNA, where it nucleates assembly of the 50S subunit. In terms of biological role, one of the proteins that surrounds the polypeptide exit tunnel on the outside of the subunit. This Syntrophotalea carbinolica (strain DSM 2380 / NBRC 103641 / GraBd1) (Pelobacter carbinolicus) protein is Large ribosomal subunit protein uL24.